The primary structure comprises 1603 residues: Gag-Pol polyprotein (1603 aa).

Over residues 128 to 141 (VGETTVQRDAKMAP) the composition is skewed to basic and acidic residues. Residues 128–150 (VGETTVQRDAKMAPEETATPKTV) are disordered. Positions 172-175 (PPPY) match the PPXY motif motif. The LYPX(n)L motif signature appears at 180-184 (LYPSL). The interval 181–217 (YPSLAGVGEQQGQGGDTPPGAEQSRAEPGHAGQAPGP) is disordered. Involved in capsid protein dimerization stretches follow at residues 217–259 (PALT…KLIT), 290–298 (HDVTNLMRV), and 351–362 (GMVGNPQGQAAL). Residues 219-229 (LTDWARVREEL) carry the Nuclear export signal motif. CCHC-type zinc fingers lie at residues 507-524 (GLCY…QCPK) and 533-550 (ERCQ…QCRK). Positions 524-527 (KKRK) match the Nuclear/nucleolar localization signal motif. The interval 543-575 (HNAKQCRKRDGNQGQRPGKGLSSGPWPGPEPPA) is disordered. Residues 609-690 (ITALLDSGAD…VRGSILGRDC (82 aa)) form the Peptidase A2 domain. Asp-614 acts as the For protease activity; shared with dimeric partner in catalysis. Residues 750 to 938 (LQLGHIEPSL…PGVQYLGYKL (189 aa)) enclose the Reverse transcriptase domain. Residues Asp-815, Asp-890, Asp-891, Asp-1158, Glu-1192, Asp-1213, and Asp-1272 each coordinate Mg(2+). In terms of domain architecture, RNase H type-1 spans 1149–1280 (PVPGPTVFTD…ADSQATFQAY (132 aa)). An Integrase-type zinc finger spans residues 1280 to 1321 (YPLREAKDLHTALHIGPRALSKACNISMQQAREVVQTCPHCN). Zn(2+)-binding residues include His-1289, His-1293, Cys-1317, and Cys-1320. An Integrase catalytic domain is found at 1333–1496 (RGLGPLQIWQ…TPIQKHWRPT (164 aa)). Mg(2+) contacts are provided by Asp-1344, Asp-1401, and Glu-1437. The integrase-type DNA-binding region spans 1502-1550 (PPVKIRIETGEWEKGWNVLVWGRGYAAVKNRDTDKVIWVPSRKVKPDIT). Residues 1548–1567 (DITQKDEVTKKDEASPLFAG) are involved in homooctamerization. The interval 1569–1603 (SDWIPWEDEQEGLQGETASNKQERPGEDTLAANES) is disordered.

In terms of assembly, active as a homodimer. As to quaternary structure, homodimer. Homomultimer. Homohexamer. Homodimer; further associates as a homooctamer. In terms of assembly, heterodimer of alpha and beta subunits. Three forms of RT exist: alpha-alpha (alpha-Pol), beta-beta (beta-Pol), and alpha-beta, with the major form being the heterodimer. Both the polymerase and RNase H active sites are located in the alpha subunit of heterodimeric RT alpha-beta. Requires Mg(2+) as cofactor. The cofactor is Mn(2+). Specific enzymatic cleavages in vivo yield mature proteins. In terms of processing, capsid protein p27: The cleavage at the C-terminus is slowly trimmed by the viral protease, sometimes being cut internally thereby generating the short version of the capsid protein and a capsid protein C-terminally extended by 3 amino acids in a ratio of 2:1.

The protein resides in the virion. The catalysed reaction is DNA(n) + a 2'-deoxyribonucleoside 5'-triphosphate = DNA(n+1) + diphosphate. It catalyses the reaction Endonucleolytic cleavage to 5'-phosphomonoester.. In terms of biological role, capsid protein p27: Self-associates to form the irregular polyhedron core composed of hexamers and pentamers, that encapsulates the genomic RNA-nucleocapsid complex. Assembles as a tube in vitro. Binds to inositol hexakisphosphate (IP6), which allows the assembly of the polyhedral capsid. Functionally, plays a role in the oligomerization of the Gag polyprotein and in the stabilization of the immature particle. Essential layering element during tube assembly. Allows the cooperative binging of Gag to the host plasma membrane. Its function is as follows. Binds strongly to viral nucleic acids and promotes their packaging. Plays a role in the maturation-stabilization of the viral dimeric RNA via highly structured zinc-binding motifs. The aspartyl protease mediates proteolytic cleavages of Gag and Gag-Pol polyproteins during or shortly after the release of the virion from the plasma membrane. Cleavages take place as an ordered, step-wise cascade to yield mature proteins. This process is called maturation. Displays maximal activity during the budding process just prior to particle release from the cell. In terms of biological role, catalyzes viral DNA integration into the host chromosome, by performing a series of DNA cutting and joining reactions. This recombination event is an essential step in the viral replication cycle. Has a strong preference for using the 3'-OH at the viral DNA end as a nucleophile. The polypeptide is Gag-Pol polyprotein (gag-pol) (Gallus gallus (Chicken)).